Consider the following 140-residue polypeptide: Nucleoside diphosphate kinase (140 aa).

6 residues coordinate ATP: Lys11, Phe59, Arg87, Thr93, Arg104, and Asn114. His117 (pros-phosphohistidine intermediate) is an active-site residue.

This sequence belongs to the NDK family. As to quaternary structure, homotetramer. Requires Mg(2+) as cofactor.

The protein resides in the cytoplasm. The catalysed reaction is a 2'-deoxyribonucleoside 5'-diphosphate + ATP = a 2'-deoxyribonucleoside 5'-triphosphate + ADP. It catalyses the reaction a ribonucleoside 5'-diphosphate + ATP = a ribonucleoside 5'-triphosphate + ADP. Functionally, major role in the synthesis of nucleoside triphosphates other than ATP. The ATP gamma phosphate is transferred to the NDP beta phosphate via a ping-pong mechanism, using a phosphorylated active-site intermediate. This Rhizobium meliloti (strain 1021) (Ensifer meliloti) protein is Nucleoside diphosphate kinase.